The chain runs to 301 residues: Nucleotide-binding protein ELI_02120 (301 aa).

12–19 serves as a coordination point for ATP; that stretch reads GMSGAGKS. 62–65 is a binding site for GTP; sequence DSRT.

It belongs to the RapZ-like family.

Its function is as follows. Displays ATPase and GTPase activities. This chain is Nucleotide-binding protein ELI_02120, found in Erythrobacter litoralis (strain HTCC2594).